A 279-amino-acid chain; its full sequence is Ribosomal RNA small subunit methyltransferase A (279 aa).

S-adenosyl-L-methionine contacts are provided by N28, L30, G55, E77, D103, and N122.

Belongs to the class I-like SAM-binding methyltransferase superfamily. rRNA adenine N(6)-methyltransferase family. RsmA subfamily.

The protein localises to the cytoplasm. It carries out the reaction adenosine(1518)/adenosine(1519) in 16S rRNA + 4 S-adenosyl-L-methionine = N(6)-dimethyladenosine(1518)/N(6)-dimethyladenosine(1519) in 16S rRNA + 4 S-adenosyl-L-homocysteine + 4 H(+). Specifically dimethylates two adjacent adenosines (A1518 and A1519) in the loop of a conserved hairpin near the 3'-end of 16S rRNA in the 30S particle. May play a critical role in biogenesis of 30S subunits. The sequence is that of Ribosomal RNA small subunit methyltransferase A from Ruegeria pomeroyi (strain ATCC 700808 / DSM 15171 / DSS-3) (Silicibacter pomeroyi).